Consider the following 228-residue polypeptide: Ras-related protein Rab-33B (228 aa).

Residues N41, V42, G43, K44, T45, C46, T60, and T63 each contribute to the GTP site. T45 provides a ligand contact to Mg(2+). A Switch 1 motif is present at residues 54–66; it reads GRFPQRTEATIGV. Residues T63 and D86 each contribute to the Mg(2+) site. Residues 87-106 carry the Switch 2 motif; that stretch reads TAGQERFRKSMVQHYYRNVH. The GTP site is built by G89, N146, K147, D149, A177, and K178. S-geranylgeranyl cysteine attachment occurs at residues C226 and C228. Position 228 is a cysteine methyl ester (C228).

Belongs to the small GTPase superfamily. Rab family. In terms of assembly, interacts (GTP- and GDP-bound forms) with ATG16L1; the complex consists of a tetramer where two RAB33B molecules bind independently one molecule of the ATG16L1 homodimer; the interaction promotes ATG12-ATG5-ATG16L1 complex recruitment to phagophores. Interacts with ATG16L2; however interaction is approximately hundred times lower than for ATG16L1. Interacts with RIC1 (via C-terminus domain); the interaction is direct with a preference for RAB33B-GTP. Interacts with RGP1. Mg(2+) is required as a cofactor.

The protein localises to the golgi apparatus membrane. The protein resides in the golgi apparatus. It localises to the cis-Golgi network. It is found in the preautophagosomal structure membrane. It catalyses the reaction GTP + H2O = GDP + phosphate + H(+). Regulated by guanine nucleotide exchange factors (GEFs) which promote the exchange of bound GDP for free GTP. Regulated by GTPase activating proteins (GAPs) such as SGSM2 which increase the GTP hydrolysis activity. Inhibited by GDP dissociation inhibitors (GDIs). The small GTPases Rab are key regulators of intracellular membrane trafficking, from the formation of transport vesicles to their fusion with membranes. Rabs cycle between an inactive GDP-bound form and an active GTP-bound form that is able to recruit to membranes different sets of downstream effectors directly responsible for vesicle formation, movement, tethering and fusion. RAB33B acts, in coordination with RAB6A, to regulate intra-Golgi retrograde trafficking. Participates in autophagosome formation by recruiting the ATG12-ATG5-ATG16L1 complex to phagophores, probably in a nucleotide-independent manner. The polypeptide is Ras-related protein Rab-33B (RAB33B) (Gallus gallus (Chicken)).